We begin with the raw amino-acid sequence, 1126 residues long: [F-actin]-monooxygenase mical2 (1126 aa).

A monooxygenase domain region spans residues 2–494 (GENGDDKHGR…KHLFITNELQ (493 aa)). Residues cysteine 97, 116 to 118 (EKR), 123 to 125 (RNN), phenylalanine 183, tyrosine 299, and aspartate 399 contribute to the FAD site. Positions 516–619 (DVRPNKLLIW…MVLYLSKFYE (104 aa)) constitute a Calponin-homology (CH) domain. The Nuclear localization signal motif lies at 659-680 (RKRVPKDEKTSDDSDLNKRRKT). Disordered regions lie at residues 748-830 (AVTA…SLSS) and 892-935 (PSLG…SGMS). The segment covering 792-803 (VRPPVQPRPGPA) has biased composition (pro residues). Over residues 805 to 824 (PTRELRVVERAQSHPDDLGR) the composition is skewed to basic and acidic residues. Over residues 918-932 (SSSDSSPSSAPSRKS) the composition is skewed to low complexity. In terms of domain architecture, LIM zinc-binding spans 1001-1063 (DTCYFCKRRV…QPHFMHSVTK (63 aa)). Residues cysteine 1003, cysteine 1006, histidine 1024, cysteine 1027, cysteine 1030, cysteine 1033, cysteine 1053, and histidine 1056 each contribute to the Zn(2+) site.

The protein belongs to the Mical family. FAD serves as cofactor.

It localises to the nucleus. Its subcellular location is the cytoplasm. The enzyme catalyses L-methionyl-[F-actin] + NADPH + O2 + H(+) = L-methionyl-(R)-S-oxide-[F-actin] + NADP(+) + H2O. Nuclear monooxygenase that promotes depolymerization of F-actin by mediating oxidation of specific methionine residues on actin and regulates the srf signaling. Acts by modifying nuclear actin subunits through the addition of oxygen to form methionine-sulfoxide, leading to promote actin filament severing and prevent repolymerization. Acts as a key regulator of the srf signaling pathway elicited by nerve growth factor and serum: mediates oxidation and subsequent depolymerization of nuclear actin, leading to increase mkl1/mrtf-a presence in the nucleus and promote srf:mkl1/mrtf-a-dependent gene transcription. This chain is [F-actin]-monooxygenase mical2, found in Xenopus tropicalis (Western clawed frog).